Reading from the N-terminus, the 273-residue chain is MSRVVSLLLGAALLCGHGAFCRRVVSGQKVCFADFKHPCYKMAYFHELSSRVSFQEARLACESEGGVLLSLENEAEQKLIESMLQNLTKPGTGISDGDFWIGLWRNGDGQTSGACPDLYQWSDGSNSQYRNWYTDEPSCGSEKCVVMYHQPTANPGLGGPYLYQWNDDRCNMKHNYICKYEPEINPTAPVEKPYLTNQPGDTHQNVVVTEAGIIPNLIYVVIPTIPLLLLILVAFGTCCFQMLHKSKGRTKTSPNQSTLWISKSTRKESGMEV.

Residues 1 to 21 form the signal peptide; that stretch reads MSRVVSLLLGAALLCGHGAFC. The Extracellular segment spans residues 22–216; the sequence is RRVVSGQKVC…VVTEAGIIPN (195 aa). One can recognise a C-type lectin domain in the interval 35–179; sequence FKHPCYKMAY…CNMKHNYICK (145 aa). Disulfide bonds link cysteine 61-cysteine 178 and cysteine 144-cysteine 170. Asparagine 86 carries N-linked (GlcNAc...) asparagine glycosylation. Residues 217–237 traverse the membrane as a helical segment; that stretch reads LIYVVIPTIPLLLLILVAFGT. The Cytoplasmic segment spans residues 238–273; sequence CCFQMLHKSKGRTKTSPNQSTLWISKSTRKESGMEV. Residues 248-273 form a disordered region; sequence GRTKTSPNQSTLWISKSTRKESGMEV. Residues 251 to 263 are compositionally biased toward polar residues; sequence KTSPNQSTLWISK.

In terms of assembly, interacts with RABGGTB. N-glycosylated. Found in spleen, testis, prostate and fetal liver. Expression limited to vascular muscle of testis, smooth muscle of prostate stroma, heart muscle, skeletal muscle, crypts of small intestine, and red pulp of spleen. B lymphocytes express isoform 2 only; peripheral blood T lymphocytes express isoform 3 only; granulocytes and monocytes express neither isoform 2 nor isoform 3. During development of T lymphocytes, bone marrow progenitor cells express isoform 2 only; thymocytes at different stages of maturation express predominantly isoform 2 and weakly isoform 3, and mature thymocytes express only isoform 2.

The protein localises to the cytoplasm. The protein resides in the membrane. It localises to the endoplasmic reticulum. Its subcellular location is the endoplasmic reticulum membrane. In terms of biological role, may play a role in the development of the nervous system such as in neurite outgrowth and elongation. May be involved in motor axon growth and guidance. This chain is Chondrolectin (CHODL), found in Homo sapiens (Human).